Reading from the N-terminus, the 219-residue chain is Ras-related protein Rab-3 (219 aa).

GTP is bound by residues G29–S37, T48–T54, D77–Q81, N135–D138, and S165–K167. The short motif at F51–F59 is the Effector region element. Positions L191 to C219 are disordered. A compositionally biased stretch (polar residues) spans N207–C219. S-geranylgeranyl cysteine attachment occurs at residues C217 and C219. C219 bears the Cysteine methyl ester mark.

This sequence belongs to the small GTPase superfamily. Rab family.

It localises to the cell membrane. Its function is as follows. Involved in exocytosis by regulating a late step in synaptic vesicle fusion. Could play a role in neurotransmitter release by regulating membrane flow in the nerve terminal. Plays a role in the recruitment of endophilin unc-57 to synaptic vesicles. Probably by controlling dense-core vesicle trafficking, plays a role in the AVG neuron-mediated formation of the right axon tract of the ventral nerve cord. This chain is Ras-related protein Rab-3 (rab-3), found in Caenorhabditis elegans.